The primary structure comprises 166 residues: MISDDSDRFNPRDPKPANAGKPSKSAKRREARQLATQALYQWHMAKHSLNEIEAQFRVDNDFTDIDGAYFREILHGVPANKNEIDTALVPCLDLAIDELDPVELAVLRLSTWELLKRVDVPYRVVINEGIELAKVFGSTDGHKFVNGVLDKLAPRLREAEVKAFKR.

Residues 1 to 15 (MISDDSDRFNPRDPK) are compositionally biased toward basic and acidic residues. A disordered region spans residues 1-30 (MISDDSDRFNPRDPKPANAGKPSKSAKRRE).

The protein belongs to the NusB family.

Its function is as follows. Involved in transcription antitermination. Required for transcription of ribosomal RNA (rRNA) genes. Binds specifically to the boxA antiterminator sequence of the ribosomal RNA (rrn) operons. This is Transcription antitermination protein NusB from Pseudomonas fluorescens (strain ATCC BAA-477 / NRRL B-23932 / Pf-5).